We begin with the raw amino-acid sequence, 116 residues long: Iron-sulfur cluster insertion protein ErpA (116 aa).

Iron-sulfur cluster-binding residues include Cys44, Cys108, and Cys110.

It belongs to the HesB/IscA family. Homodimer. Iron-sulfur cluster is required as a cofactor.

Its function is as follows. Required for insertion of 4Fe-4S clusters for at least IspG. This is Iron-sulfur cluster insertion protein ErpA from Shewanella loihica (strain ATCC BAA-1088 / PV-4).